We begin with the raw amino-acid sequence, 130 residues long: Protein ApaG (130 aa).

The ApaG domain occupies 3 to 127 (RAVTRQIEVT…FSLDSPDNKR (125 aa)).

The sequence is that of Protein ApaG from Bradyrhizobium diazoefficiens (strain JCM 10833 / BCRC 13528 / IAM 13628 / NBRC 14792 / USDA 110).